Reading from the N-terminus, the 220-residue chain is Translation initiation factor 6 (220 aa).

It belongs to the eIF-6 family.

Its function is as follows. Binds to the 50S ribosomal subunit and prevents its association with the 30S ribosomal subunit to form the 70S initiation complex. The protein is Translation initiation factor 6 of Methanoculleus marisnigri (strain ATCC 35101 / DSM 1498 / JR1).